The following is a 131-amino-acid chain: MSMSDPLSDLLTRIRNGQAAGKAEIIVPASKLKRAVCQVLKEEGYIAGFSDVTEQGKHNIRVELKYHNGAPVIDKIQRVSKPGCRRYRGRDELPKVMGGFGIAIVSTSKGVMSDRRARSVGEGGEVLCVVE.

Belongs to the universal ribosomal protein uS8 family. In terms of assembly, part of the 30S ribosomal subunit. Contacts proteins S5 and S12.

Functionally, one of the primary rRNA binding proteins, it binds directly to 16S rRNA central domain where it helps coordinate assembly of the platform of the 30S subunit. The sequence is that of Small ribosomal subunit protein uS8 from Methylococcus capsulatus (strain ATCC 33009 / NCIMB 11132 / Bath).